We begin with the raw amino-acid sequence, 488 residues long: UDP-N-acetylmuramate--L-alanine ligase (488 aa).

ATP is bound at residue 127 to 133 (GTHGKTT).

This sequence belongs to the MurCDEF family.

Its subcellular location is the cytoplasm. It carries out the reaction UDP-N-acetyl-alpha-D-muramate + L-alanine + ATP = UDP-N-acetyl-alpha-D-muramoyl-L-alanine + ADP + phosphate + H(+). It functions in the pathway cell wall biogenesis; peptidoglycan biosynthesis. Functionally, cell wall formation. This chain is UDP-N-acetylmuramate--L-alanine ligase, found in Shewanella oneidensis (strain ATCC 700550 / JCM 31522 / CIP 106686 / LMG 19005 / NCIMB 14063 / MR-1).